The following is a 73-amino-acid chain: uncharacterized protein (73 aa).

In terms of processing, N-glycosylated.

This is an uncharacterized protein from Saccharomyces cerevisiae (strain ATCC 204508 / S288c) (Baker's yeast).